A 340-amino-acid polypeptide reads, in one-letter code: Glyceraldehyde-3-phosphate dehydrogenase (340 aa).

NAD(+) is bound by residues 11-12 (SI) and glycine 111. D-glyceraldehyde 3-phosphate is bound at residue 140 to 142 (SCN). Cysteine 141 (nucleophile) is an active-site residue. An NAD(+)-binding site is contributed by arginine 169. 195–196 (HG) is a D-glyceraldehyde 3-phosphate binding site. Glutamine 303 is an NAD(+) binding site.

The protein belongs to the glyceraldehyde-3-phosphate dehydrogenase family. As to quaternary structure, homotetramer.

It is found in the cytoplasm. The catalysed reaction is D-glyceraldehyde 3-phosphate + phosphate + NADP(+) = (2R)-3-phospho-glyceroyl phosphate + NADPH + H(+). It catalyses the reaction D-glyceraldehyde 3-phosphate + phosphate + NAD(+) = (2R)-3-phospho-glyceroyl phosphate + NADH + H(+). It participates in carbohydrate degradation; glycolysis; pyruvate from D-glyceraldehyde 3-phosphate: step 1/5. In Methanococcus maripaludis (strain C7 / ATCC BAA-1331), this protein is Glyceraldehyde-3-phosphate dehydrogenase.